The sequence spans 93 residues: Small ribosomal subunit protein uS19c (93 aa).

This sequence belongs to the universal ribosomal protein uS19 family.

The protein localises to the plastid. Its subcellular location is the chloroplast. In terms of biological role, protein S19 forms a complex with S13 that binds strongly to the 16S ribosomal RNA. This is Small ribosomal subunit protein uS19c from Tetradesmus obliquus (Green alga).